The primary structure comprises 155 residues: Peptide deformylase (155 aa).

Residues Cys-88 and His-130 each contribute to the Fe cation site. Glu-131 is a catalytic residue. Position 134 (His-134) interacts with Fe cation.

It belongs to the polypeptide deformylase family. The cofactor is Fe(2+).

It catalyses the reaction N-terminal N-formyl-L-methionyl-[peptide] + H2O = N-terminal L-methionyl-[peptide] + formate. Functionally, removes the formyl group from the N-terminal Met of newly synthesized proteins. Requires at least a dipeptide for an efficient rate of reaction. N-terminal L-methionine is a prerequisite for activity but the enzyme has broad specificity at other positions. This Pelotomaculum thermopropionicum (strain DSM 13744 / JCM 10971 / SI) protein is Peptide deformylase.